We begin with the raw amino-acid sequence, 354 residues long: 3'-5' exonuclease (354 aa).

The interval 1-120 (MERYLTKMPI…PSPEKEKPEK (120 aa)) is disordered. The span at 13 to 50 (KANEVPKKEAFAKKETPKVARKATKTDTPKELKDKENA) shows a compositional bias: basic and acidic residues. The span at 59 to 70 (TKGRPGRPAAKR) shows a compositional bias: basic residues. Positions 71–91 (KNLDTPDVKDEKIAMEEENPP) are enriched in basic and acidic residues. Phosphoserine occurs at positions 104, 110, and 112. The 3'-5' exonuclease domain maps to 149-314 (WVEKQKDDVV…GQVIYRELER (166 aa)). Positions 163, 165, and 301 each coordinate Mg(2+).

Belongs to the WRNexo family.

It is found in the nucleus. Functionally, has exonuclease activity on both single-stranded and duplex templates bearing overhangs, but not blunt ended duplex DNA, and cleaves in a 3'-5' direction. Essential for the formation of DNA replication focal centers. Has an important role in maintaining genome stability. The polypeptide is 3'-5' exonuclease (Drosophila sechellia (Fruit fly)).